We begin with the raw amino-acid sequence, 179 residues long: Putative FBD-associated F-box protein At3g12840 (179 aa).

In terms of domain architecture, F-box spans 14-60; the sequence is AARINDLPDDLLATVLSFVPTKDAVATSILSKRWRPIWKRAVNLESD. An FBD domain is found at 101–152; that stretch reads KWKQPDFVPLSLYRSLEAFEWIGFKGREKTEKKAAFHILRNACNLKTMAITT.

The polypeptide is Putative FBD-associated F-box protein At3g12840 (Arabidopsis thaliana (Mouse-ear cress)).